A 262-amino-acid chain; its full sequence is MPKATIVEKTPLFLKAVIEGAYPSLVNSIRRVIISELPVMAIDYVVIVSNTSVMYDEMLAHRLGLVPLTTPLQALPPIEDCETGLVDPSECTVRLMLQINAESDKIVYSGDLVSERPDVVPVYKDIPIVKLVKGQSIILEAYAKLGRAKEHAKWQAALASYYYYPRIKVLDEKCKEECKDICKELTNPFECTFNKAWTCRDICGDRLIVEWDRYKYVFWVESFGNYDVETALREAFRILKKKFSDFITTLTQKAGSLVETKV.

The protein belongs to the archaeal Rpo3/eukaryotic RPB3 RNA polymerase subunit family. As to quaternary structure, part of the RNA polymerase complex.

It localises to the cytoplasm. The catalysed reaction is RNA(n) + a ribonucleoside 5'-triphosphate = RNA(n+1) + diphosphate. DNA-dependent RNA polymerase (RNAP) catalyzes the transcription of DNA into RNA using the four ribonucleoside triphosphates as substrates. In Pyrobaculum islandicum (strain DSM 4184 / JCM 9189 / GEO3), this protein is DNA-directed RNA polymerase subunit Rpo3.